The primary structure comprises 188 residues: Nicotinamide/nicotinic acid mononucleotide adenylyltransferase (188 aa).

Belongs to the archaeal NMN adenylyltransferase family.

It carries out the reaction beta-nicotinamide D-ribonucleotide + ATP + H(+) = diphosphate + NAD(+). The catalysed reaction is nicotinate beta-D-ribonucleotide + ATP + H(+) = deamido-NAD(+) + diphosphate. It functions in the pathway cofactor biosynthesis; NAD(+) biosynthesis; NAD(+) from nicotinamide D-ribonucleotide: step 1/1. It participates in cofactor biosynthesis; NAD(+) biosynthesis; deamido-NAD(+) from nicotinate D-ribonucleotide: step 1/1. Its function is as follows. Dual substrate specificity enzyme that catalyzes the formation of NAD(+) from nicotinamide mononucleotide (NMN) and the formation of deamido-NAD(+) (NaAD) from nicotinate mononucleotide (NaMN). Shows nearly identical catalytic efficiency for both physiological substrates. Plays an essential role in all three routes of NAD biogenesis, de novo synthesis as well as the deamidating and nondeamidating salvage pathways. The polypeptide is Nicotinamide/nicotinic acid mononucleotide adenylyltransferase (Acinetobacter baylyi (strain ATCC 33305 / BD413 / ADP1)).